Consider the following 461-residue polypeptide: Photosystem II CP43 reaction center protein (461 aa).

A propeptide spanning residues 1–2 is cleaved from the precursor; it reads ME. Residue threonine 3 is modified to N-acetylthreonine. Phosphothreonine is present on threonine 3. A run of 5 helical transmembrane segments spans residues 57-81, 122-143, 166-188, 243-263, and 279-300; these read LFEV…PHIA, LIGP…KDKN, KAMY…RIIT, TPWP…LSYS, and WFNN…ASQA. Glutamate 355 serves as a coordination point for [CaMn4O5] cluster. A helical transmembrane segment spans residues 435–459; that stretch reads RARAAAAGFEKGIDRVDEPVLSMRP.

It belongs to the PsbB/PsbC family. PsbC subfamily. In terms of assembly, PSII is composed of 1 copy each of membrane proteins PsbA, PsbB, PsbC, PsbD, PsbE, PsbF, PsbH, PsbI, PsbJ, PsbK, PsbL, PsbM, PsbT, PsbX, PsbY, PsbZ, Psb30/Ycf12, at least 3 peripheral proteins of the oxygen-evolving complex and a large number of cofactors. It forms dimeric complexes. Requires Binds multiple chlorophylls and provides some of the ligands for the Ca-4Mn-5O cluster of the oxygen-evolving complex. It may also provide a ligand for a Cl- that is required for oxygen evolution. PSII binds additional chlorophylls, carotenoids and specific lipids. as cofactor.

It localises to the plastid. The protein localises to the chloroplast thylakoid membrane. One of the components of the core complex of photosystem II (PSII). It binds chlorophyll and helps catalyze the primary light-induced photochemical processes of PSII. PSII is a light-driven water:plastoquinone oxidoreductase, using light energy to abstract electrons from H(2)O, generating O(2) and a proton gradient subsequently used for ATP formation. The sequence is that of Photosystem II CP43 reaction center protein from Chlamydomonas moewusii (Chlamydomonas eugametos).